Reading from the N-terminus, the 606-residue chain is Elongation factor 4 (606 aa).

Residues 7-189 (SRIRNFCIIA…AVVDRVPPPK (183 aa)) form the tr-type G domain. Residues 19–24 (DHGKST) and 136–139 (NKID) contribute to the GTP site.

It belongs to the TRAFAC class translation factor GTPase superfamily. Classic translation factor GTPase family. LepA subfamily.

Its subcellular location is the cell inner membrane. The catalysed reaction is GTP + H2O = GDP + phosphate + H(+). Required for accurate and efficient protein synthesis under certain stress conditions. May act as a fidelity factor of the translation reaction, by catalyzing a one-codon backward translocation of tRNAs on improperly translocated ribosomes. Back-translocation proceeds from a post-translocation (POST) complex to a pre-translocation (PRE) complex, thus giving elongation factor G a second chance to translocate the tRNAs correctly. Binds to ribosomes in a GTP-dependent manner. This is Elongation factor 4 from Parasynechococcus marenigrum (strain WH8102).